We begin with the raw amino-acid sequence, 98 residues long: NADH-ubiquinone oxidoreductase chain 4L (98 aa).

A run of 3 helical transmembrane segments spans residues 1-21 (MTPTYMNIMLAFTISLLGMLT), 27-47 (VASLLCLEGMMMSLFIMATLI), and 61-81 (IILLVFAACETAVGLALLISI).

This sequence belongs to the complex I subunit 4L family. In terms of assembly, core subunit of respiratory chain NADH dehydrogenase (Complex I) which is composed of 45 different subunits.

The protein localises to the mitochondrion inner membrane. The enzyme catalyses a ubiquinone + NADH + 5 H(+)(in) = a ubiquinol + NAD(+) + 4 H(+)(out). In terms of biological role, core subunit of the mitochondrial membrane respiratory chain NADH dehydrogenase (Complex I) which catalyzes electron transfer from NADH through the respiratory chain, using ubiquinone as an electron acceptor. Part of the enzyme membrane arm which is embedded in the lipid bilayer and involved in proton translocation. This Macaca fascicularis (Crab-eating macaque) protein is NADH-ubiquinone oxidoreductase chain 4L (MT-ND4L).